Consider the following 167-residue polypeptide: Large ribosomal subunit protein uL10 (167 aa).

Belongs to the universal ribosomal protein uL10 family. As to quaternary structure, part of the ribosomal stalk of the 50S ribosomal subunit. The N-terminus interacts with L11 and the large rRNA to form the base of the stalk. The C-terminus forms an elongated spine to which L12 dimers bind in a sequential fashion forming a multimeric L10(L12)X complex.

Forms part of the ribosomal stalk, playing a central role in the interaction of the ribosome with GTP-bound translation factors. The protein is Large ribosomal subunit protein uL10 of Dichelobacter nodosus (strain VCS1703A).